The sequence spans 179 residues: uncharacterized protein (179 aa).

The segment at 160–179 is disordered; it reads QPIEPNGTQPATETKTPVGV. Residues 165–179 are compositionally biased toward polar residues; it reads NGTQPATETKTPVGV.

Belongs to the Dps family.

This is an uncharacterized protein from Anabaena variabilis.